The primary structure comprises 341 residues: Aspartate--ammonia ligase (341 aa).

Belongs to the class-II aminoacyl-tRNA synthetase family. AsnA subfamily.

The protein resides in the cytoplasm. It catalyses the reaction L-aspartate + NH4(+) + ATP = L-asparagine + AMP + diphosphate + H(+). The protein operates within amino-acid biosynthesis; L-asparagine biosynthesis; L-asparagine from L-aspartate (ammonia route): step 1/1. This is Aspartate--ammonia ligase from Clostridium tetani (strain Massachusetts / E88).